The sequence spans 195 residues: Imidazoleglycerol-phosphate dehydratase (195 aa).

The protein belongs to the imidazoleglycerol-phosphate dehydratase family.

Its subcellular location is the cytoplasm. It carries out the reaction D-erythro-1-(imidazol-4-yl)glycerol 3-phosphate = 3-(imidazol-4-yl)-2-oxopropyl phosphate + H2O. It participates in amino-acid biosynthesis; L-histidine biosynthesis; L-histidine from 5-phospho-alpha-D-ribose 1-diphosphate: step 6/9. The protein is Imidazoleglycerol-phosphate dehydratase of Methanosphaerula palustris (strain ATCC BAA-1556 / DSM 19958 / E1-9c).